Here is a 221-residue protein sequence, read N- to C-terminus: MELLIHQLLSKEESKKITSNITKDNSCWIDGKTSAGSYAAKVKNNLQLKKDSEVGVTNSNKVNNKLTSDQLIKSFALPRKVHGTMFTRSSVGQGYGMHVDNAYMSSGRSDLSFTIFLSSPNEYQGGELLIQSMQGVKEIKLNCGQIVIYPSTSLHSVKQVSQGERIVCVGWIQSYVANNEDRNFLFGLDAGARGLLAKHGRSDELDLVFQAYSNLLRRLGD.

One can recognise a Fe2OG dioxygenase domain in the interval 80-174; that stretch reads KVHGTMFTRS…RIVCVGWIQS (95 aa). Residues histidine 98, aspartate 100, and histidine 155 each coordinate Fe cation. Residue arginine 165 participates in 2-oxoglutarate binding.

Fe(2+) is required as a cofactor. The cofactor is L-ascorbate.

This chain is PKHD-type hydroxylase P9211_12561, found in Prochlorococcus marinus (strain MIT 9211).